The chain runs to 60 residues: Ixodegrin YY-39 (60 aa).

The first 21 residues, 1–21, serve as a signal peptide directing secretion; that stretch reads MNAALIAALLILGALTLDATA. The Cell attachment site motif lies at 49-51; it reads RGD.

Belongs to the ixodegrin family. In terms of processing, contains 3 disulfide bonds. Expressed in salivary glands.

The protein localises to the secreted. Tick salivary platelet aggregation inhibitor that plays an important part in the anti-hemostatic strategy of ticks. Inhibits platelet aggregation induced by ADP, thrombin and thromboxane A2 (TXA2). Blocks platelet adhesion to soluble collagen (most probably through the binding to alpha-2/beta-1 integrin (ITGA2/ITGB1)) and binds to purified glycoprotein IIb/IIIa (ITGA2B/ITGB3) in a dose-dependent manner. In vivo, reduces thrombus weight effectively in a rat arteriovenous shunt model and inhibits thrombosis in a carrageenan-induced mouse tail thrombosis model. In Ixodes scapularis (Black-legged tick), this protein is Ixodegrin YY-39.